The primary structure comprises 340 residues: DnaJ homolog subfamily B member 1 (340 aa).

The J domain maps to 2-70 (GKDYYQTLGL…REIFDRYGEE (69 aa)). Residue threonine 307 is modified to Phosphothreonine.

In terms of assembly, interacts with DNAJC3. Interacts with HSF1 (via transactivation domain); this interaction results in the inhibition of heat shock- and HSF1-induced transcriptional activity during the attenuation and recovery phase period of the heat shock response. Interacts with BAG3.

It is found in the cytoplasm. It localises to the nucleus. The protein resides in the nucleolus. Interacts with HSP70 and can stimulate its ATPase activity. Stimulates the association between HSC70 and HIP. Negatively regulates heat shock-induced HSF1 transcriptional activity during the attenuation and recovery phase period of the heat shock response. Stimulates ATP hydrolysis and the folding of unfolded proteins mediated by HSPA1A/B (in vitro). The protein is DnaJ homolog subfamily B member 1 (DNAJB1) of Homo sapiens (Human).